The primary structure comprises 129 residues: Small ribosomal subunit protein uS9 (129 aa).

Positions 97-129 (LKAQGFLTRDPRKKERKKYGRKKARKSFQFSKR) are disordered. Positions 110–129 (KERKKYGRKKARKSFQFSKR) are enriched in basic residues.

The protein belongs to the universal ribosomal protein uS9 family.

This is Small ribosomal subunit protein uS9 from Chlamydia trachomatis serovar A (strain ATCC VR-571B / DSM 19440 / HAR-13).